The primary structure comprises 695 residues: UvrABC system protein B (695 aa).

Residues 45 to 434 (EGIEDGLSFQ…QVVEQVVRPT (390 aa)) form the Helicase ATP-binding domain. 58 to 65 (GVTGSGKT) contributes to the ATP binding site. The Beta-hairpin signature appears at 111–134 (YYDYYQPEAYVPQRDLFIEKDSSI). The Helicase C-terminal domain maps to 449 to 602 (QVDDLLSEIN…QMAFNEANGI (154 aa)). One can recognise a UVR domain in the interval 646 to 681 (SKEIKRLEKLMMDHAKNLEFEKAAQVRDQLAKLKAQ).

This sequence belongs to the UvrB family. Forms a heterotetramer with UvrA during the search for lesions. Interacts with UvrC in an incision complex.

It is found in the cytoplasm. Functionally, the UvrABC repair system catalyzes the recognition and processing of DNA lesions. A damage recognition complex composed of 2 UvrA and 2 UvrB subunits scans DNA for abnormalities. Upon binding of the UvrA(2)B(2) complex to a putative damaged site, the DNA wraps around one UvrB monomer. DNA wrap is dependent on ATP binding by UvrB and probably causes local melting of the DNA helix, facilitating insertion of UvrB beta-hairpin between the DNA strands. Then UvrB probes one DNA strand for the presence of a lesion. If a lesion is found the UvrA subunits dissociate and the UvrB-DNA preincision complex is formed. This complex is subsequently bound by UvrC and the second UvrB is released. If no lesion is found, the DNA wraps around the other UvrB subunit that will check the other stand for damage. The polypeptide is UvrABC system protein B (Cupriavidus pinatubonensis (strain JMP 134 / LMG 1197) (Cupriavidus necator (strain JMP 134))).